Consider the following 151-residue polypeptide: Molybdopterin synthase catalytic subunit (151 aa).

Residues 38–40 (KVR), 104–105 (HR), K120, and 127–129 (KRE) each bind substrate.

The protein belongs to the MoaE family. In terms of assembly, heterotetramer of 2 MoaD subunits and 2 MoaE subunits. Also stable as homodimer. The enzyme changes between these two forms during catalysis.

The enzyme catalyses 2 [molybdopterin-synthase sulfur-carrier protein]-C-terminal-Gly-aminoethanethioate + cyclic pyranopterin phosphate + H2O = molybdopterin + 2 [molybdopterin-synthase sulfur-carrier protein]-C-terminal Gly-Gly + 2 H(+). Its pathway is cofactor biosynthesis; molybdopterin biosynthesis. Its function is as follows. Converts molybdopterin precursor Z into molybdopterin. This requires the incorporation of two sulfur atoms into precursor Z to generate a dithiolene group. The sulfur is provided by MoaD. This is Molybdopterin synthase catalytic subunit (moaE) from Yersinia pestis.